The following is a 228-amino-acid chain: Urease subunit gamma/beta (228 aa).

Residues 1-101 form a urease gamma region; the sequence is MQLTERERDK…LVTVHDPIRG (101 aa). The urease beta stretch occupies residues 102-228; sequence AASRRVAGEY…ARAAGFGGAQ (127 aa).

This sequence in the N-terminal section; belongs to the urease gamma subunit family. The protein in the C-terminal section; belongs to the urease beta subunit family. As to quaternary structure, heterohexamer of 3 UreC (alpha) and 3 UreAB (gamma/beta) subunits.

It is found in the cytoplasm. The enzyme catalyses urea + 2 H2O + H(+) = hydrogencarbonate + 2 NH4(+). It participates in nitrogen metabolism; urea degradation; CO(2) and NH(3) from urea (urease route): step 1/1. The protein is Urease subunit gamma/beta of Deinococcus radiodurans (strain ATCC 13939 / DSM 20539 / JCM 16871 / CCUG 27074 / LMG 4051 / NBRC 15346 / NCIMB 9279 / VKM B-1422 / R1).